We begin with the raw amino-acid sequence, 487 residues long: Sodium-coupled neutral amino acid symporter 1 (487 aa).

At 1 to 74 the chain is on the cytoplasmic side; that stretch reads MMHFKSGLEL…EYIPGTTSLG (74 aa). A Phosphoserine modification is found at Ser-6. Thr-11 bears the Phosphothreonine mark. Ser-25, Ser-28, Ser-49, and Ser-52 each carry phosphoserine. Residue Thr-54 is modified to Phosphothreonine. Residue Ser-56 is modified to Phosphoserine. A helical membrane pass occupies residues 75–97; that stretch reads MSVFNLSNAIMGSGILGLAFALA. The Extracellular segment spans residues 98-112; the sequence is NTGILLFLVLLTSVT. Residues 113 to 133 form a helical membrane-spanning segment; sequence LLSIYSINLLLICSKETGCMV. Over 134-147 the chain is Cytoplasmic; sequence YEKLGEQVFGTTGK. The chain crosses the membrane as a helical span at residues 148–168; it reads FVIFGATSLQNTGAMLSYLFI. The Extracellular segment spans residues 169 to 188; sequence VKNELPSAIKFLMGKEETFS. Residues 189–211 traverse the membrane as a helical segment; the sequence is AWYVDGRVLVVIVTFGIILPLCL. At 212 to 216 the chain is on the cytoplasmic side; sequence LKNLG. Residues 217-237 form a helical membrane-spanning segment; sequence YLGYTSGFSLSCMVFFLIVVI. At 238–275 the chain is on the extracellular side; the sequence is YKKFQIPCIVPELNSTISANSTNADTCTPKYVTLNSKT. Cys-245 and Cys-264 are disulfide-bonded. Asn-251 and Asn-257 each carry an N-linked (GlcNAc...) asparagine glycan. Residues 276-296 form a helical membrane-spanning segment; it reads VYALPTIAFAFVCHPSVLPIY. Residues 297–312 lie on the Cytoplasmic side of the membrane; it reads SELKDRSQKKMQMVSN. A helical membrane pass occupies residues 313 to 333; sequence ISFFAMFVMYFLTAIFGYLTF. Residues 334 to 350 lie on the Extracellular side of the membrane; sequence YDNVQSDLLHKYQGKDD. Residues 351 to 371 form a helical membrane-spanning segment; it reads ILILTVRLAVIVAVILTVPVL. The Cytoplasmic portion of the chain corresponds to 372-393; the sequence is FFTVRSSLFELAKKTKFNLCRH. Residues 394-414 traverse the membrane as a helical segment; the sequence is TVVTCILLVVINLLVISIPSM. Topologically, residues 415-416 are extracellular; it reads KD. The chain crosses the membrane as a helical span at residues 417–437; the sequence is IFGVVGVTSANMLIFILPSSL. Over 438 to 452 the chain is Cytoplasmic; that stretch reads YLKITDQDGDKGTQR. Residues 453-473 traverse the membrane as a helical segment; the sequence is IWAALFLGLGVLFSLVSIPLV. The Extracellular segment spans residues 474-487; it reads IYDWACSSSSDEGH.

Belongs to the amino acid/polyamine transporter 2 family. In terms of processing, N-glycosylation plays an important role in the L-glutamine transport.

The protein resides in the cell membrane. It carries out the reaction L-glutamine(in) + Na(+)(in) = L-glutamine(out) + Na(+)(out). The enzyme catalyses L-alanine(in) + Na(+)(in) = L-alanine(out) + Na(+)(out). It catalyses the reaction L-asparagine(in) + Na(+)(in) = L-asparagine(out) + Na(+)(out). The catalysed reaction is L-histidine(in) + Na(+)(in) = L-histidine(out) + Na(+)(out). It carries out the reaction L-serine(in) + Na(+)(in) = L-serine(out) + Na(+)(out). The enzyme catalyses L-cysteine(in) + Na(+)(in) = L-cysteine(out) + Na(+)(out). It catalyses the reaction L-methionine(in) + Na(+)(in) = L-methionine(out) + Na(+)(out). The catalysed reaction is glycine(in) + Na(+)(in) = glycine(out) + Na(+)(out). It carries out the reaction L-threonine(in) + Na(+)(in) = L-threonine(out) + Na(+)(out). The enzyme catalyses L-proline(in) + Na(+)(in) = L-proline(out) + Na(+)(out). Its activity is regulated as follows. Inhibited by alpha-(methylamino)isobutyric acid (MeAIB). Inhibited by lithium, potassium, choline ions, N-methylglucamine. The pH dependence has an allosteric effect on the transport. Symporter that cotransports short-chain neutral amino acids and sodium ions from the extraccellular to the intracellular side of the cell membrane. The transport is elctrogenic, pH dependent and driven by the Na(+) electrochemical gradient. Participates in the astroglia-derived glutamine transport into GABAergic interneurons for neurotransmitter GABA de novo synthesis. May also contributes to amino acid transport in placental trophoblast. Regulates synaptic plasticity. The chain is Sodium-coupled neutral amino acid symporter 1 from Pongo abelii (Sumatran orangutan).